Consider the following 347-residue polypeptide: S-adenosylmethionine:tRNA ribosyltransferase-isomerase (347 aa).

The protein belongs to the QueA family. Monomer.

It is found in the cytoplasm. It catalyses the reaction 7-aminomethyl-7-carbaguanosine(34) in tRNA + S-adenosyl-L-methionine = epoxyqueuosine(34) in tRNA + adenine + L-methionine + 2 H(+). It participates in tRNA modification; tRNA-queuosine biosynthesis. In terms of biological role, transfers and isomerizes the ribose moiety from AdoMet to the 7-aminomethyl group of 7-deazaguanine (preQ1-tRNA) to give epoxyqueuosine (oQ-tRNA). The protein is S-adenosylmethionine:tRNA ribosyltransferase-isomerase of Halalkalibacterium halodurans (strain ATCC BAA-125 / DSM 18197 / FERM 7344 / JCM 9153 / C-125) (Bacillus halodurans).